The chain runs to 530 residues: Purine-cytosine permease FCY22 (530 aa).

T46 carries the post-translational modification Phosphothreonine. Helical transmembrane passes span M96 to G116, V119 to F139, F162 to S182, C197 to G217, V220 to I240, G263 to A283, I298 to A318, A345 to L365, V372 to I392, V396 to F416, G418 to A438, and L463 to G483.

The protein belongs to the purine-cytosine permease (2.A.39) family.

The protein localises to the membrane. In terms of biological role, probable purine-cytosine permease. This chain is Purine-cytosine permease FCY22 (FCY22), found in Saccharomyces cerevisiae (strain ATCC 204508 / S288c) (Baker's yeast).